The primary structure comprises 156 residues: Small ribosomal subunit protein uS7 (156 aa).

Belongs to the universal ribosomal protein uS7 family. As to quaternary structure, part of the 30S ribosomal subunit. Contacts proteins S9 and S11.

In terms of biological role, one of the primary rRNA binding proteins, it binds directly to 16S rRNA where it nucleates assembly of the head domain of the 30S subunit. Is located at the subunit interface close to the decoding center, probably blocks exit of the E-site tRNA. In Mycolicibacterium vanbaalenii (strain DSM 7251 / JCM 13017 / BCRC 16820 / KCTC 9966 / NRRL B-24157 / PYR-1) (Mycobacterium vanbaalenii), this protein is Small ribosomal subunit protein uS7.